Consider the following 172-residue polypeptide: Cytochrome b6-f complex iron-sulfur subunit (172 aa).

A helical transmembrane segment spans residues 19 to 39; it reads LNALLSGSVGVVVVGALYPVV. The Rieske domain maps to 61-161; sequence GKPISVSELL…ATVDGDNVRF (101 aa). Positions 107, 109, 125, and 128 each coordinate [2Fe-2S] cluster. Cysteine 112 and cysteine 127 form a disulfide bridge.

It belongs to the Rieske iron-sulfur protein family. As to quaternary structure, the 4 large subunits of the cytochrome b6-f complex are cytochrome b6, subunit IV (17 kDa polypeptide, PetD), cytochrome f and the Rieske protein, while the 4 small subunits are PetG, PetL, PetM and PetN. The complex functions as a dimer. The cofactor is [2Fe-2S] cluster.

It localises to the cellular thylakoid membrane. The enzyme catalyses 2 oxidized [plastocyanin] + a plastoquinol + 2 H(+)(in) = 2 reduced [plastocyanin] + a plastoquinone + 4 H(+)(out). Functionally, component of the cytochrome b6-f complex, which mediates electron transfer between photosystem II (PSII) and photosystem I (PSI), cyclic electron flow around PSI, and state transitions. In Synechococcus sp. (strain JA-2-3B'a(2-13)) (Cyanobacteria bacterium Yellowstone B-Prime), this protein is Cytochrome b6-f complex iron-sulfur subunit.